The following is a 620-amino-acid chain: 1-deoxy-D-xylulose-5-phosphate synthase (620 aa).

Thiamine diphosphate-binding positions include His-80 and 121–123 (GHS). Asp-152 contacts Mg(2+). Thiamine diphosphate-binding positions include 153-154 (GA), Asn-181, Tyr-288, and Glu-370. Asn-181 contacts Mg(2+).

It belongs to the transketolase family. DXPS subfamily. Homodimer. The cofactor is Mg(2+). Thiamine diphosphate serves as cofactor.

The catalysed reaction is D-glyceraldehyde 3-phosphate + pyruvate + H(+) = 1-deoxy-D-xylulose 5-phosphate + CO2. It functions in the pathway metabolic intermediate biosynthesis; 1-deoxy-D-xylulose 5-phosphate biosynthesis; 1-deoxy-D-xylulose 5-phosphate from D-glyceraldehyde 3-phosphate and pyruvate: step 1/1. Catalyzes the acyloin condensation reaction between C atoms 2 and 3 of pyruvate and glyceraldehyde 3-phosphate to yield 1-deoxy-D-xylulose-5-phosphate (DXP). The sequence is that of 1-deoxy-D-xylulose-5-phosphate synthase from Photobacterium profundum (strain SS9).